An 800-amino-acid chain; its full sequence is Nuclear poly(A) polymerase 2 (800 aa).

Residues 103-105, 115-118, Asp-171, Lys-232, Tyr-241, and 250-251 each bind ATP; these read FGS, ADID, and GV. 3 residues coordinate Mg(2+): Asp-116, Asp-118, and Asp-171. 2 consecutive short sequence motifs (nuclear localization signal) follow at residues 487–494 and 533–540; these read RRRQLPSF and KRKNDDEI. Residues 497–576 are disordered; sequence PNGYKRSRQS…SGITTSGTPQ (80 aa). Over residues 527–538 the composition is skewed to basic and acidic residues; that stretch reads SVERYAKRKNDD. Residues 564-575 are compositionally biased toward polar residues; it reads PDSSGITTSGTP.

This sequence belongs to the poly(A) polymerase family. Monomer. Forms a complex with cleavage and polyadenylation specificity factor (CPSF) subunits CPSF100, CPSF30, FIPS5 and PABN2. Mg(2+) serves as cofactor. It depends on Mn(2+) as a cofactor. As to expression, mostly expressed in flowers (highly in the style, receptacle and pedicel, but weakly in the vasculature of sepals) and hypocotyls, and, to a lower extent, in roots and stems. Barely detected in leaves (petioles and vascular system).

The protein localises to the nucleus. The protein resides in the cytoplasm. The enzyme catalyses RNA(n) + ATP = RNA(n)-3'-adenine ribonucleotide + diphosphate. Essential protein. Polymerase that creates the 3'-poly(A) tail of mRNA's. Also required for the endoribonucleolytic cleavage reaction at some polyadenylation sites. May acquire specificity through interaction with a cleavage and polyadenylation specificity factor (CPSF) at its C-terminus. Mediates the polyadenylation of RNAs that are associated with polynucleotide phosphorylase (e.g. PNP1). This chain is Nuclear poly(A) polymerase 2, found in Arabidopsis thaliana (Mouse-ear cress).